A 115-amino-acid chain; its full sequence is Large ribosomal subunit protein bL19 (115 aa).

This sequence belongs to the bacterial ribosomal protein bL19 family.

This protein is located at the 30S-50S ribosomal subunit interface and may play a role in the structure and function of the aminoacyl-tRNA binding site. This chain is Large ribosomal subunit protein bL19, found in Alkaliphilus oremlandii (strain OhILAs) (Clostridium oremlandii (strain OhILAs)).